The sequence spans 247 residues: E3 ubiquitin-protein ligase RNF182 (247 aa).

The RING-type zinc finger occupies 20 to 68; the sequence is CKICYNRYNLKQRKPKVLECCHRVCAKCLYKIIDFGDSPQGVIVCPFCR. The next 2 helical transmembrane spans lie at 184–204 and 211–231; these read VLVW…IYLL and LGVV…VYGF.

In terms of assembly, interacts with ATP6V0C. Up-regulated in neuronal cells subjected to cell death-inducing injuries, such as oxygen and glucose deprivation (at protein level). Could be up-regulated in Alzheimer disease brains. Highly expressed in innate immune organs such as lymph nodes and spleen and in immune cells such as macrophages and dendritic cells.

The protein resides in the membrane. It is found in the cytoplasm. It carries out the reaction S-ubiquitinyl-[E2 ubiquitin-conjugating enzyme]-L-cysteine + [acceptor protein]-L-lysine = [E2 ubiquitin-conjugating enzyme]-L-cysteine + N(6)-ubiquitinyl-[acceptor protein]-L-lysine.. It participates in protein modification; protein ubiquitination. E3 ubiquitin-protein ligase that mediates the ubiquitination of ATP6V0C and targets it to degradation via the ubiquitin-proteasome pathway. Also plays a role in the inhibition of TLR-triggered innate immune response by mediating 'Lys'-48-linked ubiquitination and subsequent degradation of NF-kappa-B component RELA. This Homo sapiens (Human) protein is E3 ubiquitin-protein ligase RNF182 (RNF182).